A 287-amino-acid chain; its full sequence is uncharacterized protein (287 aa).

The ATP-grasp domain occupies 115–287; it reads SLLSKETIKS…KKFLKKKLIS (173 aa).

This is an uncharacterized protein from Mycoplasma genitalium (strain ATCC 33530 / DSM 19775 / NCTC 10195 / G37) (Mycoplasmoides genitalium).